A 150-amino-acid polypeptide reads, in one-letter code: Large ribosomal subunit protein bL9 (150 aa).

The protein belongs to the bacterial ribosomal protein bL9 family.

Functionally, binds to the 23S rRNA. The polypeptide is Large ribosomal subunit protein bL9 (Leuconostoc mesenteroides subsp. mesenteroides (strain ATCC 8293 / DSM 20343 / BCRC 11652 / CCM 1803 / JCM 6124 / NCDO 523 / NBRC 100496 / NCIMB 8023 / NCTC 12954 / NRRL B-1118 / 37Y)).